Here is a 177-residue protein sequence, read N- to C-terminus: Interleukin-10 (177 aa).

Residues 1–19 (MPSSSAVLCCLVFLAGVAA) form the signal peptide. 2 disulfide bridges follow: cysteine 31/cysteine 127 and cysteine 81/cysteine 133. The N-linked (GlcNAc...) asparagine glycan is linked to asparagine 135.

It belongs to the IL-10 family. In terms of assembly, homodimer. Interacts with IL10RA and IL10RB.

The protein localises to the secreted. Functionally, major immune regulatory cytokine that acts on many cells of the immune system where it has profound anti-inflammatory functions, limiting excessive tissue disruption caused by inflammation. Mechanistically, IL10 binds to its heterotetrameric receptor comprising IL10RA and IL10RB leading to JAK1 and STAT2-mediated phosphorylation of STAT3. In turn, STAT3 translocates to the nucleus where it drives expression of anti-inflammatory mediators. Targets antigen-presenting cells (APCs) such as macrophages and monocytes and inhibits their release of pro-inflammatory cytokines including granulocyte-macrophage colony-stimulating factor /GM-CSF, granulocyte colony-stimulating factor/G-CSF, IL-1 alpha, IL-1 beta, IL-6, IL-8 and TNF-alpha. Also interferes with antigen presentation by reducing the expression of MHC-class II and co-stimulatory molecules, thereby inhibiting their ability to induce T cell activation. In addition, controls the inflammatory response of macrophages by reprogramming essential metabolic pathways including mTOR signaling. The protein is Interleukin-10 (IL10) of Ovis aries (Sheep).